The sequence spans 351 residues: Transaldolase (351 aa).

Lys-138 acts as the Schiff-base intermediate with substrate in catalysis.

It belongs to the transaldolase family. Type 2 subfamily.

It is found in the cytoplasm. It catalyses the reaction D-sedoheptulose 7-phosphate + D-glyceraldehyde 3-phosphate = D-erythrose 4-phosphate + beta-D-fructose 6-phosphate. The protein operates within carbohydrate degradation; pentose phosphate pathway; D-glyceraldehyde 3-phosphate and beta-D-fructose 6-phosphate from D-ribose 5-phosphate and D-xylulose 5-phosphate (non-oxidative stage): step 2/3. Its function is as follows. Transaldolase is important for the balance of metabolites in the pentose-phosphate pathway. In Neisseria meningitidis serogroup A / serotype 4A (strain DSM 15465 / Z2491), this protein is Transaldolase (tal).